Reading from the N-terminus, the 505-residue chain is Aspartyl/glutamyl-tRNA(Asn/Gln) amidotransferase subunit B (505 aa).

Positions 220–241 (NVSLRPRPAPGDPDAPFGTRSE) are disordered.

The protein belongs to the GatB/GatE family. GatB subfamily. Heterotrimer of A, B and C subunits.

It catalyses the reaction L-glutamyl-tRNA(Gln) + L-glutamine + ATP + H2O = L-glutaminyl-tRNA(Gln) + L-glutamate + ADP + phosphate + H(+). The enzyme catalyses L-aspartyl-tRNA(Asn) + L-glutamine + ATP + H2O = L-asparaginyl-tRNA(Asn) + L-glutamate + ADP + phosphate + 2 H(+). Functionally, allows the formation of correctly charged Asn-tRNA(Asn) or Gln-tRNA(Gln) through the transamidation of misacylated Asp-tRNA(Asn) or Glu-tRNA(Gln) in organisms which lack either or both of asparaginyl-tRNA or glutaminyl-tRNA synthetases. The reaction takes place in the presence of glutamine and ATP through an activated phospho-Asp-tRNA(Asn) or phospho-Glu-tRNA(Gln). The polypeptide is Aspartyl/glutamyl-tRNA(Asn/Gln) amidotransferase subunit B (Frankia casuarinae (strain DSM 45818 / CECT 9043 / HFP020203 / CcI3)).